Here is a 146-residue protein sequence, read N- to C-terminus: Hemoglobin subunit beta (146 aa).

Val-1 is modified (N-acetylvaline). A Globin domain is found at 2-146 (HLTAEEKSLV…VANALAHKYH (145 aa)). Thr-12 is subject to Phosphothreonine. Ser-44 is subject to Phosphoserine. N6-acetyllysine is present on Lys-59. His-63 is a heme b binding site. Lys-82 carries the post-translational modification N6-acetyllysine. A heme b-binding site is contributed by His-92. An S-nitrosocysteine modification is found at Cys-93. Position 144 is an N6-acetyllysine (Lys-144).

The protein belongs to the globin family. As to quaternary structure, heterotetramer of two alpha chains and two beta chains. As to expression, red blood cells.

Involved in oxygen transport from the lung to the various peripheral tissues. The protein is Hemoglobin subunit beta (HBB) of Vulpes vulpes (Red fox).